The following is a 754-amino-acid chain: 5-methyltetrahydropteroyltriglutamate--homocysteine methyltransferase (754 aa).

Residues 17-20 (RELK) and Lys117 contribute to the 5-methyltetrahydropteroyltri-L-glutamate site. L-homocysteine contacts are provided by residues 431–433 (IGS) and Glu484. Residues 431–433 (IGS) and Glu484 contribute to the L-methionine site. 5-methyltetrahydropteroyltri-L-glutamate is bound by residues 515–516 (RC) and Trp561. Residue Asp599 participates in L-homocysteine binding. Asp599 contacts L-methionine. Glu605 is a binding site for 5-methyltetrahydropteroyltri-L-glutamate. His641, Cys643, and Glu665 together coordinate Zn(2+). His694 serves as the catalytic Proton donor. Residue Cys726 coordinates Zn(2+).

It belongs to the vitamin-B12 independent methionine synthase family. The cofactor is Zn(2+).

The catalysed reaction is 5-methyltetrahydropteroyltri-L-glutamate + L-homocysteine = tetrahydropteroyltri-L-glutamate + L-methionine. The protein operates within amino-acid biosynthesis; L-methionine biosynthesis via de novo pathway; L-methionine from L-homocysteine (MetE route): step 1/1. In terms of biological role, catalyzes the transfer of a methyl group from 5-methyltetrahydrofolate to homocysteine resulting in methionine formation. This is 5-methyltetrahydropteroyltriglutamate--homocysteine methyltransferase from Salmonella newport (strain SL254).